The sequence spans 215 residues: UPF0502 protein YceH (215 aa).

The protein belongs to the UPF0502 family.

This is UPF0502 protein YceH from Salmonella heidelberg (strain SL476).